The chain runs to 216 residues: Probable transaldolase (216 aa).

K83 serves as the catalytic Schiff-base intermediate with substrate.

The protein belongs to the transaldolase family. Type 3B subfamily.

Its subcellular location is the cytoplasm. It catalyses the reaction D-sedoheptulose 7-phosphate + D-glyceraldehyde 3-phosphate = D-erythrose 4-phosphate + beta-D-fructose 6-phosphate. The protein operates within carbohydrate degradation; pentose phosphate pathway; D-glyceraldehyde 3-phosphate and beta-D-fructose 6-phosphate from D-ribose 5-phosphate and D-xylulose 5-phosphate (non-oxidative stage): step 2/3. Its function is as follows. Transaldolase is important for the balance of metabolites in the pentose-phosphate pathway. This chain is Probable transaldolase, found in Symbiobacterium thermophilum (strain DSM 24528 / JCM 14929 / IAM 14863 / T).